A 199-amino-acid polypeptide reads, in one-letter code: Protein ASYMMETRIC LEAVES 2 (199 aa).

The LOB domain occupies Ser8–Leu109.

It belongs to the LOB domain-containing protein family. Homo- and heterodimer with AS1. Interacts with AS1. Part of the AS1 repressor complex composed of AS1, LBD6/AS2 and HDA6. Interacts with LFR. Expressed in young shoots, roots, stems, leaves, flowers and adaxial domains of cotyledonary and leaves primordia.

The protein resides in the nucleus. Its function is as follows. Negative regulator of cell proliferation in the adaxial side of leaves. Regulates the formation of a symmetric lamina and the establishment of venation. Positively regulates LATERAL ORGAN BOUNDARIES (LOB) within the shoot apex, and the class III HD-ZIP genes REV, PHB, and PHV. Interacts directly with ASYMMETRIC LEAVES 1 (AS1) to repress the knox homeobox genes KNAT1, KNAT2, and KNAT6 and the abaxial determinants ARF3, KAN2 and YAB5. May act in parallel with the RDR6-SGS3-AGO7 pathway, an endogenous RNA silencing pathway, to regulate the leaf morphogenesis. Required for the binding of AS1 to the KNOX genes. Involved in leaf polarity establishment by functioning cooperatively with RH10 or RID2 to repress abaxial genes ARF3, ARF4, KAN1, KAN2, YAB1 and YAB5, and the knox homeobox genes KNAT1, KNAT2, KNAT6, and STM to promote adaxial development in leaf primordia at shoot apical meristems at high temperatures. The polypeptide is Protein ASYMMETRIC LEAVES 2 (Arabidopsis thaliana (Mouse-ear cress)).